A 493-amino-acid polypeptide reads, in one-letter code: UDP-N-acetylmuramoyl-L-alanyl-D-glutamate--2,6-diaminopimelate ligase (493 aa).

Residue S31 participates in UDP-N-acetyl-alpha-D-muramoyl-L-alanyl-D-glutamate binding. 111-117 is a binding site for ATP; the sequence is GTNGKTT. Residues N152, 153-154, S180, and R188 contribute to the UDP-N-acetyl-alpha-D-muramoyl-L-alanyl-D-glutamate site; that span reads TT. K220 is subject to N6-carboxylysine. Residues R386, 410–413, G462, and E466 contribute to the meso-2,6-diaminopimelate site; that span reads DNPR. The Meso-diaminopimelate recognition motif signature appears at 410 to 413; sequence DNPR.

Belongs to the MurCDEF family. MurE subfamily. Requires Mg(2+) as cofactor. Post-translationally, carboxylation is probably crucial for Mg(2+) binding and, consequently, for the gamma-phosphate positioning of ATP.

The protein localises to the cytoplasm. The catalysed reaction is UDP-N-acetyl-alpha-D-muramoyl-L-alanyl-D-glutamate + meso-2,6-diaminopimelate + ATP = UDP-N-acetyl-alpha-D-muramoyl-L-alanyl-gamma-D-glutamyl-meso-2,6-diaminopimelate + ADP + phosphate + H(+). It functions in the pathway cell wall biogenesis; peptidoglycan biosynthesis. Catalyzes the addition of meso-diaminopimelic acid to the nucleotide precursor UDP-N-acetylmuramoyl-L-alanyl-D-glutamate (UMAG) in the biosynthesis of bacterial cell-wall peptidoglycan. The polypeptide is UDP-N-acetylmuramoyl-L-alanyl-D-glutamate--2,6-diaminopimelate ligase (murE1) (Oceanobacillus iheyensis (strain DSM 14371 / CIP 107618 / JCM 11309 / KCTC 3954 / HTE831)).